An 887-amino-acid chain; its full sequence is Dystrophin-like protein 1 (887 aa).

Residues 30 to 197 (YQHGIHFEAK…KISMQSEDEA (168 aa)) form the PID domain. Composition is skewed to basic and acidic residues over residues 176–186 (MQEKHEDEAAK) and 205–216 (IEERGGREEDSR). 5 disordered regions span residues 176–254 (MQEK…GTAI), 506–606 (EIHH…QYER), 641–753 (QFDM…KNTA), 804–839 (IAEE…PPNT), and 853–887 (NVDR…GYPQ). The span at 242 to 254 (KPSTTSSSGGTAI) shows a compositional bias: polar residues. A coiled-coil region spans residues 434 to 506 (QLMRSQLDQA…QMLETKITSE (73 aa)). Positions 510-519 (SSSQPPQHQP) are enriched in low complexity. The span at 573–588 (KESKERRKDEGTRTEP) shows a compositional bias: basic and acidic residues. Over residues 597–606 (DYSSSDQYER) the composition is skewed to polar residues. Polar residues-rich tracts occupy residues 816–827 (NRNNLPSSTNSS) and 863–887 (SLLT…GYPQ).

As to quaternary structure, component of the dystrophin glycoprotein complex (DGC). Interacts with zyx-1. Expressed in muscles of the head, body wall and vulva. In some animals, weaker expression is observed in the intestinal muscles (at protein level). Isoform a is expressed in lateral neurons SDQL and SDQR.

Its function is as follows. Together with dys-1 and hlh-1, participates in a common muscular function. The polypeptide is Dystrophin-like protein 1 (Caenorhabditis elegans).